Reading from the N-terminus, the 468-residue chain is MAARGSGPRALRLLLLVQLVAGRCGLAGAAGGAQRGLSEPSSIAKHEDSLLKDLFQDYERWVRPVEHLNDKIKIKFGLAISQLVDVDEKNQLMTTNVWLKQEWIDVKLRWNPDDYGGIKVIRVPSDSVWTPDIVLFDNADGRFEGTSTKTVIRYNGTVTWTPPANYKSSCTIDVTFFPFDLQNCSMKFGSWTYDGSQVDIILEDQDVDKRDFFDNGEWEIVSATGSKGNRTDSCCWYPYVTYSFVIKRLPLFYTLFLIIPCIGLSFLTVLVFYLPSNEGEKICLCTSVLVSLTVFLLVIEEIIPSSSKVIPLIGEYLVFTMIFVTLSIMVTVFAINIHHRSSSTHNAMAPLVRKIFLHTLPKLLCMRSHVDRYFTQKEETESGSGPKSSRNTLEAALDSIRYITRHIMKENDVREVVEDWKFIAQVLDRMFLWTFLFVSIVGSLGLFVPVIYKWANILIPVHIGNANK.

A signal peptide spans 1–22; the sequence is MAARGSGPRALRLLLLVQLVAG. Residues 23–254 lie on the Extracellular side of the membrane; that stretch reads RCGLAGAAGG…VIKRLPLFYT (232 aa). Residues asparagine 155, asparagine 183, and asparagine 229 are each glycosylated (N-linked (GlcNAc...) asparagine). Residues cysteine 170 and cysteine 184 are joined by a disulfide bond. A disulfide bond links cysteine 234 and cysteine 235. The next 3 helical transmembrane spans lie at 255–275, 282–302, and 317–337; these read LFLIIPCIGLSFLTVLVFYLP, ICLCTSVLVSLTVFLLVIEEI, and LVFTMIFVTLSIMVTVFAINI. The Cytoplasmic portion of the chain corresponds to 338–429; it reads HHRSSSTHNA…WKFIAQVLDR (92 aa). Residues 430–451 form a helical membrane-spanning segment; the sequence is MFLWTFLFVSIVGSLGLFVPVI. At 452-468 the chain is on the extracellular side; it reads YKWANILIPVHIGNANK.

It belongs to the ligand-gated ion channel (TC 1.A.9) family. Acetylcholine receptor (TC 1.A.9.1) subfamily. Alpha-5/CHRNA5 sub-subfamily. Neuronal AChR that forms heteropentamers composed of two different type of subunits: alpha and non-alpha (beta). CHRNA5/alpha-5 subunit is only able to form functional nAChRs when co-assembled with another alpha subunit, can be combined to CHRNA4/alpha-4 or CHRNA3/alpha-3 and CHRNB4/beta-4 or CHRNB2/beta-2 to give rise to functional receptors. Interacts with LYPD6.

Its subcellular location is the synaptic cell membrane. It localises to the cell membrane. The enzyme catalyses Ca(2+)(in) = Ca(2+)(out). The catalysed reaction is K(+)(in) = K(+)(out). It catalyses the reaction Na(+)(in) = Na(+)(out). With respect to regulation, activated by a myriad of ligands such as acetylcholine, cytisine, nicotine, choline and epibatidine. Its function is as follows. Component of neuronal acetylcholine receptors (nAChRs) that function as pentameric, ligand-gated cation channels with high calcium permeability among other activities. nAChRs are excitatory neurotrasnmitter receptors formed by a collection of nAChR subunits known to mediate synaptic transmission in the nervous system and the neuromuscular junction. Each nAchR subunit confers differential attributes to channel properties, including activation, deactivation and desensitization kinetics, pH sensitivity, cation permeability, and binding to allosteric modulators. Has an accessory rather than functional role and is only able to form functional nAChRs when co-assembled with another beta subunit. Participates in pentameric assemblies along with CHRNA3, CHRNA4, CHRNB2 and CHRNB4. Increases receptor sensitivity to acetylcholine and nicotine when associated with CHRNA4 and CHRNB2. Plays a role in nicotine addiction. The protein is Neuronal acetylcholine receptor subunit alpha-5 of Homo sapiens (Human).